Reading from the N-terminus, the 870-residue chain is Disks large homolog 2 (870 aa).

Residues cysteine 5 and cysteine 7 are each lipidated (S-palmitoyl cysteine). The residue at position 28 (serine 28) is a Phosphoserine. Tyrosine 58 is subject to Phosphotyrosine. At serine 65 the chain carries Phosphoserine. PDZ domains follow at residues 98 to 184 and 193 to 279; these read EITL…VRRR and EIKL…VGKP. Residues serine 307, serine 328, serine 360, serine 365, serine 406, and serine 414 each carry the phosphoserine modification. The PDZ 3 domain occupies 421 to 501; it reads KVVLHKGSTG…QTVTIIAQYQ (81 aa). Residue tyrosine 505 is modified to Phosphotyrosine. Phosphoserine is present on residues serine 528, serine 530, serine 553, serine 627, and serine 635. Residues 536–606 form the SH3 domain; sequence KRSLYVRAMF…PSKRRVERKE (71 aa). Residues 680-855 enclose the Guanylate kinase-like domain; the sequence is TRPVIILGPM…IYNQCKLVIE (176 aa). Residues tyrosine 750 and tyrosine 755 each carry the phosphotyrosine modification.

The protein belongs to the MAGUK family. Interacts through its PDZ domains with NETO1. Interacts with NOS1/nNOS through second PDZ domain. Interacts with KCNJ2/Kir2.1 (via C-terminus) through one of its PDZ domains. Interacts with KCNJ4, Interacts with FRMPD4 (via C-terminus). Interacts with LRFN1, LRFN2 and LRFN4. Interacts with FASLG. Interacts with KCNJ4. Interacts with ADAM22. Interacts with DGKI (via PDZ-binding motif). Palmitoylation of isoform 1 is not required for targeting to postsynaptic density.

The protein localises to the cell membrane. It is found in the postsynaptic density. Its subcellular location is the synapse. It localises to the membrane. The protein resides in the cell projection. The protein localises to the axon. It is found in the perikaryon. In terms of biological role, required for perception of chronic pain through NMDA receptor signaling. Regulates surface expression of NMDA receptors in dorsal horn neurons of the spinal cord. Interacts with the cytoplasmic tail of NMDA receptor subunits as well as inward rectifying potassium channels. Involved in regulation of synaptic stability at cholinergic synapses. Part of the postsynaptic protein scaffold of excitatory synapses. This chain is Disks large homolog 2 (DLG2), found in Homo sapiens (Human).